The chain runs to 108 residues: UPF0060 membrane protein YnfA (108 aa).

Residues 1-5 (MIKTT) lie on the Periplasmic side of the membrane. Residues 6–26 (LLFFATALCEIIGCFLPWLWL) form a helical membrane-spanning segment. Residues 27–30 (KRNA) lie on the Cytoplasmic side of the membrane. A helical transmembrane segment spans residues 31 to 51 (SIWLLLPAGISLALFVWLLTL). Residues 52–60 (HPAASGRVY) are Periplasmic-facing. A helical membrane pass occupies residues 61–81 (AAYGGVYVCTALIWLRVVDGV). Residues 82–84 (KLT) lie on the Cytoplasmic side of the membrane. Residues 85 to 105 (LYDWTGALIALCGMLIIVAGW) form a helical membrane-spanning segment. The Periplasmic portion of the chain corresponds to 106–108 (GRT).

The protein belongs to the UPF0060 family.

The protein localises to the cell inner membrane. The sequence is that of UPF0060 membrane protein YnfA from Escherichia coli O127:H6 (strain E2348/69 / EPEC).